We begin with the raw amino-acid sequence, 295 residues long: Pyridoxal 5'-phosphate synthase subunit PdxS (295 aa).

Residue Asp-25 coordinates D-ribose 5-phosphate. Lys-82 (schiff-base intermediate with D-ribose 5-phosphate) is an active-site residue. Gly-154 contacts D-ribose 5-phosphate. Residue Arg-166 participates in D-glyceraldehyde 3-phosphate binding. Residues Gly-215 and 236–237 (GS) each bind D-ribose 5-phosphate.

It belongs to the PdxS/SNZ family. In the presence of PdxT, forms a dodecamer of heterodimers.

It catalyses the reaction aldehydo-D-ribose 5-phosphate + D-glyceraldehyde 3-phosphate + L-glutamine = pyridoxal 5'-phosphate + L-glutamate + phosphate + 3 H2O + H(+). It participates in cofactor biosynthesis; pyridoxal 5'-phosphate biosynthesis. In terms of biological role, catalyzes the formation of pyridoxal 5'-phosphate from ribose 5-phosphate (RBP), glyceraldehyde 3-phosphate (G3P) and ammonia. The ammonia is provided by the PdxT subunit. Can also use ribulose 5-phosphate and dihydroxyacetone phosphate as substrates, resulting from enzyme-catalyzed isomerization of RBP and G3P, respectively. This is Pyridoxal 5'-phosphate synthase subunit PdxS from Oceanobacillus iheyensis (strain DSM 14371 / CIP 107618 / JCM 11309 / KCTC 3954 / HTE831).